A 207-amino-acid chain; its full sequence is Large ribosomal subunit protein uL3 (207 aa).

The segment at 119–143 (GFQGSIKRNGQHRGPMAHGSRYHRR) is disordered.

The protein belongs to the universal ribosomal protein uL3 family. As to quaternary structure, part of the 50S ribosomal subunit. Forms a cluster with proteins L14 and L19.

Functionally, one of the primary rRNA binding proteins, it binds directly near the 3'-end of the 23S rRNA, where it nucleates assembly of the 50S subunit. The sequence is that of Large ribosomal subunit protein uL3 from Ligilactobacillus salivarius (strain UCC118) (Lactobacillus salivarius).